We begin with the raw amino-acid sequence, 423 residues long: 26S proteasome regulatory subunit 6B homolog (423 aa).

Residue 207 to 214 (GPPGTGKT) coordinates ATP.

The protein belongs to the AAA ATPase family.

The protein localises to the cytoplasm. It is found in the nucleus. Its function is as follows. The 26S proteasome is involved in the ATP-dependent degradation of ubiquitinated proteins. The regulatory (or ATPase) complex confers ATP dependency and substrate specificity to the 26S complex. The protein is 26S proteasome regulatory subunit 6B homolog (tbpA) of Aspergillus niger.